The primary structure comprises 783 residues: Cilia- and flagella-associated protein 91 (783 aa).

Residues 748–760 (EDFELEEEAESLD) show a composition bias toward acidic residues. A disordered region spans residues 748 to 783 (EDFELEEEAESLDSEVPTVSVSKTSTIKPTQDEGEG). A compositionally biased stretch (polar residues) spans 764–776 (PTVSVSKTSTIKP).

Belongs to the CFAP91 family. In terms of assembly, part of a complex containing MYCBP, AKAP1 and PRKAR2B. Interacts with MYCBP and AKAP1. Interacts with CFAP61. In terms of processing, phosphorylated by PKA. Expressed in the testis, in cells involved in spermatogenesis.

It localises to the cytoplasm. It is found in the mitochondrion. Its subcellular location is the cytoskeleton. The protein resides in the cilium axoneme. In terms of biological role, involved in sperm flagellum axonemal organization and function. May regulate cilium motility through its role in the assembly of the axonemal radial spokes. This is Cilia- and flagella-associated protein 91 from Mus musculus (Mouse).